Reading from the N-terminus, the 161-residue chain is Endoribonuclease YbeY (161 aa).

Zn(2+) contacts are provided by H120, H124, and H130.

It belongs to the endoribonuclease YbeY family. Zn(2+) serves as cofactor.

Its subcellular location is the cytoplasm. In terms of biological role, single strand-specific metallo-endoribonuclease involved in late-stage 70S ribosome quality control and in maturation of the 3' terminus of the 16S rRNA. The polypeptide is Endoribonuclease YbeY (Erythrobacter litoralis (strain HTCC2594)).